The sequence spans 247 residues: 5-oxoprolinase subunit A (247 aa).

The protein belongs to the LamB/PxpA family. In terms of assembly, forms a complex composed of PxpA, PxpB and PxpC.

The enzyme catalyses 5-oxo-L-proline + ATP + 2 H2O = L-glutamate + ADP + phosphate + H(+). In terms of biological role, catalyzes the cleavage of 5-oxoproline to form L-glutamate coupled to the hydrolysis of ATP to ADP and inorganic phosphate. The protein is 5-oxoprolinase subunit A of Ralstonia pickettii (strain 12J).